Here is a 313-residue protein sequence, read N- to C-terminus: MPASIGGLPLPRICPHFLTLRVAIRAHLTDHVHIGLSGGPDSLALVAAARAEGAEVTAICINHNLQEGSAEVSERAAAQAEHMGATALIRSITVPPGSMEAQAREARYAEFAQLTDTIWAGHTMDDQAETFLLAGLRGNPAGMKSASRRPDLTVIRPLLGVRRADTHGACTELGLTPWQDPQNRDRAFRRVAIREQVLPLLAEIHAGDPVPGLALAATRAAMEGEALEFFVDKRRGEWADGFPVRLAAEPHALRRLMLADFLRGHGVRVTSKKIEAVDRLLTHWHGQGGVAVGGGAHGRLEVVRVSGKLEITG.

Ser37–Ser42 is a binding site for ATP.

It belongs to the tRNA(Ile)-lysidine synthase family.

Its subcellular location is the cytoplasm. The catalysed reaction is cytidine(34) in tRNA(Ile2) + L-lysine + ATP = lysidine(34) in tRNA(Ile2) + AMP + diphosphate + H(+). Functionally, ligates lysine onto the cytidine present at position 34 of the AUA codon-specific tRNA(Ile) that contains the anticodon CAU, in an ATP-dependent manner. Cytidine is converted to lysidine, thus changing the amino acid specificity of the tRNA from methionine to isoleucine. The chain is tRNA(Ile)-lysidine synthase from Corynebacterium efficiens (strain DSM 44549 / YS-314 / AJ 12310 / JCM 11189 / NBRC 100395).